A 1220-amino-acid chain; its full sequence is DNA polymerase catalytic subunit (1220 aa).

Disordered stretches follow at residues 21 to 43 (GKRP…RPPQ) and 641 to 691 (QADA…KPGV). Polar residues predominate over residues 646–660 (SETSELAMDSQSHAF).

This sequence belongs to the DNA polymerase type-B family. As to quaternary structure, forms a complex with the ssDNA-binding protein, the DNA polymerase processivity factor, and the alkaline exonuclease. Interacts with the helicase-primase complex composed of the primase, the helicase and the primase-associated factor; this interaction may coordinate leading and lagging strand DNA synthesis at the replication fork.

It is found in the host nucleus. The enzyme catalyses DNA(n) + a 2'-deoxyribonucleoside 5'-triphosphate = DNA(n+1) + diphosphate. The catalysed reaction is Endonucleolytic cleavage to 5'-phosphomonoester.. In terms of biological role, replicates viral genomic DNA. The replication complex is composed of six viral proteins: the DNA polymerase, processivity factor, primase, primase-associated factor, helicase, and ssDNA-binding protein. Additionally, the polymerase contains an intrinsic ribonuclease H (RNase H) activity that specifically degrades RNA/DNA heteroduplexes or duplex DNA substrates in the 5' to 3' direction. Therefore, it can catalyze the excision of the RNA primers that initiate the synthesis of Okazaki fragments at a replication fork during viral DNA replication. The chain is DNA polymerase catalytic subunit from Equus caballus (Horse).